A 236-amino-acid polypeptide reads, in one-letter code: Large ribosomal subunit protein uL3 (236 aa).

2 disordered regions span residues 132 to 153 (SNRA…GMAQ) and 200 to 236 (KGGD…KKGG). Positions 133-145 (NRASHGNSRSHNV) are enriched in polar residues. At glutamine 153 the chain carries N5-methylglutamine. Residues 206–216 (VSPSIRSARPT) are compositionally biased toward polar residues. Positions 217-228 (NNGNVNAAAKGG) are enriched in low complexity.

Belongs to the universal ribosomal protein uL3 family. In terms of assembly, part of the 50S ribosomal subunit. Forms a cluster with proteins L14 and L19. Post-translationally, methylated by PrmB.

One of the primary rRNA binding proteins, it binds directly near the 3'-end of the 23S rRNA, where it nucleates assembly of the 50S subunit. The protein is Large ribosomal subunit protein uL3 of Nitrosospira multiformis (strain ATCC 25196 / NCIMB 11849 / C 71).